A 203-amino-acid chain; its full sequence is Imidazole glycerol phosphate synthase subunit HisH 1 (203 aa).

Residues 1–203 (MIAIIDYNAG…KMIENFVELI (203 aa)) enclose the Glutamine amidotransferase type-1 domain. The active-site Nucleophile is the cysteine 82. Residues histidine 184 and glutamate 186 contribute to the active site.

Heterodimer of HisH and HisF.

The protein resides in the cytoplasm. The catalysed reaction is 5-[(5-phospho-1-deoxy-D-ribulos-1-ylimino)methylamino]-1-(5-phospho-beta-D-ribosyl)imidazole-4-carboxamide + L-glutamine = D-erythro-1-(imidazol-4-yl)glycerol 3-phosphate + 5-amino-1-(5-phospho-beta-D-ribosyl)imidazole-4-carboxamide + L-glutamate + H(+). It carries out the reaction L-glutamine + H2O = L-glutamate + NH4(+). Its pathway is amino-acid biosynthesis; L-histidine biosynthesis; L-histidine from 5-phospho-alpha-D-ribose 1-diphosphate: step 5/9. In terms of biological role, IGPS catalyzes the conversion of PRFAR and glutamine to IGP, AICAR and glutamate. The HisH subunit provides the glutamine amidotransferase activity that produces the ammonia necessary to HisF for the synthesis of IGP and AICAR. In Methanococcus maripaludis (strain DSM 14266 / JCM 13030 / NBRC 101832 / S2 / LL), this protein is Imidazole glycerol phosphate synthase subunit HisH 1 (hisH1).